A 986-amino-acid chain; its full sequence is Ephrin type-A receptor 4 (986 aa).

Residues 1–19 (MAGIFYFILFSFLFGICDA) form the signal peptide. Residues 20-547 (VTGSRVYPAN…RIIGDGANST (528 aa)) lie on the Extracellular side of the membrane. The region spanning 30-209 (EVTLLDSRSV…FYKKCPLTVR (180 aa)) is the Eph LBD domain. Residues N235, N340, and N408 are each glycosylated (N-linked (GlcNAc...) asparagine). Fibronectin type-III domains lie at 328 to 439 (PPSA…TNQA) and 440 to 537 (APSS…TVPS). A helical transmembrane segment spans residues 548-569 (VLLVSVSGSVVLVVILIAAFVI). The Cytoplasmic portion of the chain corresponds to 570–986 (SRRRSKYSKA…QQMHGRMVPV (417 aa)). Residues Y596 and Y602 each carry the phosphotyrosine; by autocatalysis modification. One can recognise a Protein kinase domain in the interval 621 to 882 (IKIEKVIGVG…QIVNMLDKLI (262 aa)). Residues 627 to 635 (IGVGEFGEV) and K653 each bind ATP. D746 acts as the Proton acceptor in catalysis. Phosphotyrosine; by autocatalysis is present on residues Y779 and Y928. The SAM domain maps to 911–975 (SAVVSVGDWL…LSSVQAMRTQ (65 aa)). The PDZ-binding signature appears at 984–986 (VPV).

It belongs to the protein kinase superfamily. Tyr protein kinase family. Ephrin receptor subfamily. Heterotetramer upon binding of the ligand. The heterotetramer is composed of an ephrin dimer and a receptor dimer. Oligomerization is probably required to induce biological responses. Interacts (phosphorylated at position Tyr-602) with FYN. Interacts (via PDZ motif) with SIPA1L1 (via PDZ domain); controls neuronal morphology through regulation of the RAP1 (RAP1A or RAP1B) and RAP2 (RAP2A, RAP2B or RAP2C) GTPases. Interacts with CDK5, CDK5R1 and NGEF; upon activation by EFNA1 induces NGEF phosphorylation by the kinase CDK5. Interacts with CHN1; effector of EPHA4 in axon guidance linking EPHA4 activation to RAC1 regulation. Forms a ternary complex composed of ADAM10, CADH1 and EPHA4; within the complex, CADH1 is cleaved by ADAM10 which disrupts adherens junctions. As to expression, expressed in inner and outer pillar cells of the organ of Corti (at protein level). Highest expression in the adult brain and retina and also detectable in kidney, lung, skeletal muscle and thymus. Not detected in heart and liver. Expressed in myogenic progenitor cells.

It is found in the cell membrane. Its subcellular location is the cell projection. The protein localises to the axon. The protein resides in the dendrite. It localises to the postsynaptic density membrane. It is found in the early endosome. Its subcellular location is the cell junction. The protein localises to the adherens junction. It carries out the reaction L-tyrosyl-[protein] + ATP = O-phospho-L-tyrosyl-[protein] + ADP + H(+). Receptor tyrosine kinase which binds membrane-bound ephrin family ligands residing on adjacent cells, leading to contact-dependent bidirectional signaling into neighboring cells. The signaling pathway downstream of the receptor is referred to as forward signaling while the signaling pathway downstream of the ephrin ligand is referred to as reverse signaling. Highly promiscuous, it has the unique property among Eph receptors to bind and to be physiologically activated by both GPI-anchored ephrin-A and transmembrane ephrin-B ligands including EFNA1 and EFNB3. Upon activation by ephrin ligands, modulates cell morphology and integrin-dependent cell adhesion through regulation of the Rac, Rap and Rho GTPases activity. Plays an important role in the development of the nervous system controlling different steps of axonal guidance including the establishment of the corticospinal projections. May also control the segregation of motor and sensory axons during neuromuscular circuit developmen. In addition to its role in axonal guidance plays a role in synaptic plasticity. Activated by EFNA1 phosphorylates CDK5 at 'Tyr-15' which in turn phosphorylates NGEF regulating RHOA and dendritic spine morphogenesis. In the nervous system, also plays a role in repair after injury preventing axonal regeneration and in angiogenesis playing a role in central nervous system vascular formation. Additionally, its promiscuity makes it available to participate in a variety of cell-cell signaling regulating for instance the development of the thymic epithelium. During development of the cochlear organ of Corti, regulates pillar cell separation by forming a ternary complex with ADAM10 and CADH1 which facilitates the cleavage of CADH1 by ADAM10 and disruption of adherens junctions. Phosphorylates CAPRIN1, promoting CAPRIN1-dependent formation of a membraneless compartment. This chain is Ephrin type-A receptor 4 (Epha4), found in Mus musculus (Mouse).